Consider the following 411-residue polypeptide: Isocitrate dehydrogenase [NADP] peroxisomal (411 aa).

NADP(+) contacts are provided by residues 78–80 (TIT) and Arg85. Thr80 serves as a coordination point for substrate. Substrate-binding positions include 97–103 (SPNGTLR), Arg112, and Arg135. Position 254 (Asp254) interacts with Mn(2+). Position 262 (Lys262) interacts with NADP(+). Asp277 lines the Mn(2+) pocket. NADP(+) is bound by residues 312-317 (GTVTRH) and Asn330.

This sequence belongs to the isocitrate and isopropylmalate dehydrogenases family. The cofactor is Mg(2+). It depends on Mn(2+) as a cofactor.

It localises to the peroxisome. The enzyme catalyses D-threo-isocitrate + NADP(+) = 2-oxoglutarate + CO2 + NADPH. Functionally, may play a role in N-alkane metabolism, glutamate synthesis, and/or NADPH generation in the peroxisomes. The sequence is that of Isocitrate dehydrogenase [NADP] peroxisomal (IDP2) from Candida tropicalis (Yeast).